The primary structure comprises 397 residues: Elongation factor Tu (397 aa).

In terms of domain architecture, tr-type G spans 10–207 (LPHVNVGTIG…TLDSYIPEPV (198 aa)). The G1 stretch occupies residues 19–26 (GHVDHGKT). 19–26 (GHVDHGKT) provides a ligand contact to GTP. Thr26 is a Mg(2+) binding site. The G2 stretch occupies residues 60 to 64 (GITIN). Residues 81–84 (DCPG) form a G3 region. GTP contacts are provided by residues 81-85 (DCPGH) and 136-139 (NKAD). Residues 136–139 (NKAD) are G4. Positions 174 to 176 (SAR) are G5.

Belongs to the TRAFAC class translation factor GTPase superfamily. Classic translation factor GTPase family. EF-Tu/EF-1A subfamily. In terms of assembly, monomer.

It localises to the cytoplasm. It carries out the reaction GTP + H2O = GDP + phosphate + H(+). In terms of biological role, GTP hydrolase that promotes the GTP-dependent binding of aminoacyl-tRNA to the A-site of ribosomes during protein biosynthesis. The chain is Elongation factor Tu from Pseudomonas syringae pv. syringae (strain B728a).